Reading from the N-terminus, the 174-residue chain is Non-classical export protein 2 homolog 1 (174 aa).

At 1–7 (MLSAADN) the chain is on the cytoplasmic side. A helical transmembrane segment spans residues 8-28 (LVRIINAVFLIISIGLISGLI). Over 29-41 (GTQTKHSSRVNFC) the chain is Extracellular. The chain crosses the membrane as a helical span at residues 42–62 (MFAAVYGLVTDSLYGFLANFW). The Cytoplasmic portion of the chain corresponds to 63-69 (TSLTYPA). Residues 70–90 (ILLVLDFLNFIFTFVAATALA) form a helical membrane-spanning segment. The Extracellular portion of the chain corresponds to 91 to 122 (VGIRCHSCKNKTYLEQNKIIQGSSSRCHQSQA). A helical membrane pass occupies residues 123–143 (AVAFFYFSCFLFLIKVTVATM). The Cytoplasmic portion of the chain corresponds to 144-174 (GMMQNGGFGSNTGFSRRRARRQMGIPTISQV).

It belongs to the NCE102 family.

It is found in the cell membrane. In terms of biological role, involved in membrane organization. Required for the formation of membrane compartments of CAN1 (MCCs), localization of CAN1 at the MCCs and subsequent invagination of the plasma membrane at the MCCs sites. Involved in eisosome organization and might act as a sensor of sphingolipids that regulates plasma membrane function. Involved in a novel pathway of export of proteins that lack a cleavable signal sequence. Non-classical export pathway also functions as an alternative clearance/detoxification pathway to eliminate damaged material, when the basic repair pathway is not sufficient. The protein is Non-classical export protein 2 homolog 1 (FHN1) of Saccharomyces cerevisiae (strain ATCC 204508 / S288c) (Baker's yeast).